The chain runs to 173 residues: Crossover junction endodeoxyribonuclease RuvC (173 aa).

Active-site residues include Asp8, Glu67, and Asp139. 3 residues coordinate Mg(2+): Asp8, Glu67, and Asp139.

Belongs to the RuvC family. In terms of assembly, homodimer which binds Holliday junction (HJ) DNA. The HJ becomes 2-fold symmetrical on binding to RuvC with unstacked arms; it has a different conformation from HJ DNA in complex with RuvA. In the full resolvosome a probable DNA-RuvA(4)-RuvB(12)-RuvC(2) complex forms which resolves the HJ. The cofactor is Mg(2+).

The protein localises to the cytoplasm. It catalyses the reaction Endonucleolytic cleavage at a junction such as a reciprocal single-stranded crossover between two homologous DNA duplexes (Holliday junction).. Functionally, the RuvA-RuvB-RuvC complex processes Holliday junction (HJ) DNA during genetic recombination and DNA repair. Endonuclease that resolves HJ intermediates. Cleaves cruciform DNA by making single-stranded nicks across the HJ at symmetrical positions within the homologous arms, yielding a 5'-phosphate and a 3'-hydroxyl group; requires a central core of homology in the junction. The consensus cleavage sequence is 5'-(A/T)TT(C/G)-3'. Cleavage occurs on the 3'-side of the TT dinucleotide at the point of strand exchange. HJ branch migration catalyzed by RuvA-RuvB allows RuvC to scan DNA until it finds its consensus sequence, where it cleaves and resolves the cruciform DNA. This is Crossover junction endodeoxyribonuclease RuvC from Shewanella frigidimarina (strain NCIMB 400).